A 137-amino-acid polypeptide reads, in one-letter code: MGMYLLHIGNAAVTFNGPTPCPRSPYASTHVNVSWESASGIATLWANGKLVGRKGVWKGYSVGEEAKIILGQEQDSFGGHFDENQSFVGVIWDVFLWDHVLPPKEMCDSCYSGSLLNRHTLTYEDNGYVVTKPKVWA.

The region spanning Met-1–Ala-137 is the Pentraxin (PTX) domain. 3 residues coordinate Ca(2+): Glu-73, Asp-75, and Gln-85.

This sequence belongs to the pentraxin family. As to expression, not expressed in the intestinal tract including ascending colon, descending colon and rectum. Not expressed in the human colon cancer cell lines HT-29 and CaCo-2.

This Homo sapiens (Human) protein is Putative mucosal pentraxin homolog (MPTX1).